We begin with the raw amino-acid sequence, 133 residues long: Nickel-responsive regulator (133 aa).

Residues His76, His87, His89, and Cys95 each contribute to the Ni(2+) site.

It belongs to the transcriptional regulatory CopG/NikR family. In terms of assembly, homotetramer. Ni(2+) serves as cofactor.

Transcriptional repressor of the nikABCDE operon. Is active in the presence of excessive concentrations of intracellular nickel. This chain is Nickel-responsive regulator, found in Escherichia fergusonii (strain ATCC 35469 / DSM 13698 / CCUG 18766 / IAM 14443 / JCM 21226 / LMG 7866 / NBRC 102419 / NCTC 12128 / CDC 0568-73).